The following is a 915-amino-acid chain: Clathrin coat assembly protein AP180 (915 aa).

One can recognise an ENTH domain in the interval 14-145 (QYSVTGSAVA…FSYRQMAFDF (132 aa)). 3 disordered regions span residues 285 to 326 (LEGK…DTSP), 391 to 425 (SVPSEAPISDPFAPEPSPPTTTTEPASASASATTA), and 497 to 522 (PETSAPVVTPTASTAPPVPATAPSPA). Residues S296, S300, and S306 each carry the phosphoserine modification. Polar residues predominate over residues 302-324 (LSKSSPATTVTSPNSTPAKTIDT). O-linked (GlcNAc) threonine glycosylation occurs at T310. S313 bears the Phosphoserine mark. Phosphothreonine is present on T317. Composition is skewed to low complexity over residues 410-425 (TTTTEPASASASATTA) and 500-511 (SAPVVTPTASTA). The span at 512–522 (PPVPATAPSPA) shows a compositional bias: pro residues. Residues S594, S600, P627, S640, and S646 each carry the phosphoserine modification. Positions 720–735 (TTPSTSSSSSFDPSGD) are enriched in low complexity. Positions 720–765 (TTPSTSSSSSFDPSGDLLMPTMAPSGQPAPVSMVPPSPAMSASKGL) are disordered. Position 775 is a phosphoserine (S775). Positions 817 to 855 (SAGVPPQGTVPPTSSVPPGAGAPSVGQPGAGYGMPPAGT) are disordered. R873 carries the asymmetric dimethylarginine; alternate modification. R873 carries the omega-N-methylarginine; alternate modification. Residues 875-915 (PFGAAAVPGTQLSPSPTPATQSPKKPPAKDPLADLNIKDFL) form a disordered region. Over residues 884 to 896 (TQLSPSPTPATQS) the composition is skewed to polar residues. Positions 901–915 (PAKDPLADLNIKDFL) are enriched in basic and acidic residues.

The protein belongs to the PICALM/SNAP91 family. As to quaternary structure, binds AP2A2. Interacts with AP2B1; clathrin competes with SNAP91. Post-translationally, thr-310 can be modified by the addition of N-acetylglucosamine which can be further phosphorylated. The form with phosphorylated O-linked N-acetylglucosamine is predominant in brain synaptosomes. There is no evidence for direct Thr-310 phosphorylation.

The protein resides in the cell membrane. It is found in the membrane. It localises to the coated pit. Its function is as follows. Adaptins are components of the adapter complexes which link clathrin to receptors in coated vesicles. Clathrin-associated protein complexes are believed to interact with the cytoplasmic tails of membrane proteins, leading to their selection and concentration. Binding of AP180 to clathrin triskelia induces their assembly into 60-70 nm coats. In Rattus norvegicus (Rat), this protein is Clathrin coat assembly protein AP180 (Snap91).